The following is a 131-amino-acid chain: MELEYPEDLRYLETHEYVRLEGEIATLGISAFAVDQLGDIVFLELPELGEALKVGSSFGTIESVKAVEDLYPPVSGTVVDRNQAMIDSPELIADDPHGEGWLLKVRVENPDTALADTLSASEYRTQVAGES.

Positions 24–106 (IATLGISAFA…HGEGWLLKVR (83 aa)) constitute a Lipoyl-binding domain. K65 bears the N6-lipoyllysine mark.

It belongs to the GcvH family. In terms of assembly, the glycine cleavage system is composed of four proteins: P, T, L and H. Requires (R)-lipoate as cofactor.

Its function is as follows. The glycine cleavage system catalyzes the degradation of glycine. The H protein shuttles the methylamine group of glycine from the P protein to the T protein. In Microcystis aeruginosa (strain NIES-843 / IAM M-2473), this protein is Glycine cleavage system H protein.